We begin with the raw amino-acid sequence, 52 residues long: Conotoxin Cal6.36 (52 aa).

Positions 1 to 22 (MKVTCVLTLAVLILTVGQMVTA) are cleaved as a signal peptide. Cystine bridges form between cysteine 24-cysteine 39, cysteine 31-cysteine 43, and cysteine 38-cysteine 47.

In terms of tissue distribution, expressed by the venom duct.

The protein localises to the secreted. Functionally, probable neurotoxin. The protein is Conotoxin Cal6.36 of Californiconus californicus (California cone).